The primary structure comprises 491 residues: Adenylosuccinate synthetase, chloroplastic (491 aa).

GTP is bound by residues 78–84 (GDEGKGK) and 106–108 (GHT). The active-site Proton acceptor is aspartate 79. Residues aspartate 79 and glycine 106 each contribute to the Mg(2+) site. IMP is bound by residues 79 to 82 (DEGK), 104 to 107 (NAGH), threonine 196, arginine 210, glutamine 290, threonine 305, and arginine 369. The active-site Proton donor is the histidine 107. 365–371 (TTTGRPR) is a binding site for substrate. GTP is bound by residues arginine 371, 397-399 (KLD), and 480-482 (GIG).

The protein belongs to the adenylosuccinate synthetase family. In terms of assembly, homodimer. Mg(2+) serves as cofactor.

The protein resides in the plastid. It is found in the chloroplast. The catalysed reaction is IMP + L-aspartate + GTP = N(6)-(1,2-dicarboxyethyl)-AMP + GDP + phosphate + 2 H(+). The protein operates within purine metabolism; AMP biosynthesis via de novo pathway; AMP from IMP: step 1/2. Functionally, plays an important role in the de novo pathway and in the salvage pathway of purine nucleotide biosynthesis. Catalyzes the first committed step in the biosynthesis of AMP from IMP. This Populus trichocarpa (Western balsam poplar) protein is Adenylosuccinate synthetase, chloroplastic.